Consider the following 132-residue polypeptide: Small ribosomal subunit protein uS8 (132 aa).

The protein belongs to the universal ribosomal protein uS8 family. Part of the 30S ribosomal subunit. Contacts proteins S5 and S12.

One of the primary rRNA binding proteins, it binds directly to 16S rRNA central domain where it helps coordinate assembly of the platform of the 30S subunit. The polypeptide is Small ribosomal subunit protein uS8 (Staphylococcus haemolyticus (strain JCSC1435)).